Here is a 223-residue protein sequence, read N- to C-terminus: Small ribosomal subunit protein uS5 (223 aa).

Residues 1–66 are disordered; sequence MPPQQQRGRG…AERAQAETEF (66 aa). A compositionally biased stretch (gly residues) spans 13 to 22; it reads RGPGGPGGPG. The span at 53-66 shows a compositional bias: basic and acidic residues; that stretch reads GGDKAERAQAETEF. Residues 66–129 enclose the S5 DRBM domain; that stretch reads FQERVVQIRR…SDARKALIRV (64 aa).

Belongs to the universal ribosomal protein uS5 family. As to quaternary structure, part of the 30S ribosomal subunit. Contacts proteins S4 and S8.

Its function is as follows. With S4 and S12 plays an important role in translational accuracy. Located at the back of the 30S subunit body where it stabilizes the conformation of the head with respect to the body. The sequence is that of Small ribosomal subunit protein uS5 from Gloeobacter violaceus (strain ATCC 29082 / PCC 7421).